The chain runs to 404 residues: Glycosylated lysosomal membrane protein (404 aa).

The signal sequence occupies residues 1-35 (MFRCWGPHWGWVPCAPTPWLLLSLLVCSAPFGLQG). Topologically, residues 36-370 (EETRQVSMEV…VDIFSPLVLG (335 aa)) are lumenal. N64, N85, N94, N133, N157, N166, N185, N228, and N331 each carry an N-linked (GlcNAc...) asparagine glycan. A helical membrane pass occupies residues 371 to 391 (IMAVALGAPGLMFLGGGLFLL). The Cytoplasmic segment spans residues 392-404 (LRHRRYSEYQSIN). The short motif at 400-404 (YQSIN) is the Lysosomal targeting motif element.

Belongs to the GLMP family. As to quaternary structure, interacts (via lumenal domain) with lysosomal protein MFSD1; the interaction starts while both proteins are still in the endoplasmic reticulum and is required for stabilization of MFSD1 in lysosomes but has no direct effect on its targeting to lysosomes or transporter activity. Post-translationally, highly N-glycosylated. N-glycosylation is essential for GLMP stability and for MFSD1 lysosomal localization. In terms of tissue distribution, detected in brain, heart, liver, kidney, lung, intestine, testis and spleen. Expressed at highest levels in kidney cortex. However, another study reports highest expression levels in lung. Expressed in myoblasts with expression increasing during differentiation into myotubes.

Its subcellular location is the lysosome membrane. Required to protect lysosomal transporter MFSD1 from lysosomal proteolysis and for MFSD1 lysosomal localization. This chain is Glycosylated lysosomal membrane protein, found in Mus musculus (Mouse).